Consider the following 501-residue polypeptide: Cytochrome P450 2J4 (501 aa).

2 helical membrane passes run 12–32 (IWAALHLRTLLVAALTFLLLA) and 77–97 (NIFSLNLGDITSVVITGLPLI). Residue Cys447 coordinates heme.

The protein belongs to the cytochrome P450 family. Requires heme as cofactor. As to expression, expressed in small intestinal enterocytes (at protein level). In the intestinal crypt, expressed at higher levels in the mature villous cells than in undifferentiated crypt cells (at protein level). Expressed in liver, kidney, lung, and olfactory mucosa (at protein level).

The protein resides in the endoplasmic reticulum membrane. It localises to the microsome membrane. The enzyme catalyses an organic molecule + reduced [NADPH--hemoprotein reductase] + O2 = an alcohol + oxidized [NADPH--hemoprotein reductase] + H2O + H(+). It catalyses the reaction (5Z,8Z,11Z,14Z)-eicosatetraenoate + reduced [NADPH--hemoprotein reductase] + O2 = 19-hydroxy-(5Z,8Z,11Z,14Z)-eicosatetraenoate + oxidized [NADPH--hemoprotein reductase] + H2O + H(+). It carries out the reaction all-trans-retinal + reduced [NADPH--hemoprotein reductase] + O2 = all-trans-retinoate + oxidized [NADPH--hemoprotein reductase] + H2O + 2 H(+). The catalysed reaction is 9-cis-retinal + reduced [NADPH--hemoprotein reductase] + O2 = 9-cis-retinoate + oxidized [NADPH--hemoprotein reductase] + H2O + 2 H(+). It functions in the pathway lipid metabolism; arachidonate metabolism. Its pathway is cofactor metabolism; retinol metabolism. Functionally, a cytochrome P450 monooxygenase that may play a major role in intestinal retinoid metabolism. Catalyzes the oxidative transformation of all-trans retinal and 9-cis-retinal to the corresponding active forms all-trans and 9-cis retinoic acids. Catalyzes the hydroxylation of carbon-hydrogen bonds. Hydroxylates arachidonic acid predominantly at the omega-1 position. Mechanistically, uses molecular oxygen inserting one oxygen atom into a substrate, and reducing the second into a water molecule, with two electrons provided by NADPH via cytochrome P450 reductase (CPR; NADPH--hemoprotein reductase). The polypeptide is Cytochrome P450 2J4 (Rattus norvegicus (Rat)).